The sequence spans 508 residues: Photosystem II CP47 reaction center protein (508 aa).

6 helical membrane-spanning segments follow: residues 21–36 (SVHIMHTALVAGWAGS), 101–115 (IVFSGLCFLAAIWHW), 140–156 (GIHLFLSGVACFGFGAF), 203–218 (IAAGTLGILAGLFHLS), 237–252 (VLSSSIAAVFFAAFVV), and 457–472 (SFALLFFFGHIWHGAR).

It belongs to the PsbB/PsbC family. PsbB subfamily. PSII is composed of 1 copy each of membrane proteins PsbA, PsbB, PsbC, PsbD, PsbE, PsbF, PsbH, PsbI, PsbJ, PsbK, PsbL, PsbM, PsbT, PsbX, PsbY, PsbZ, Psb30/Ycf12, at least 3 peripheral proteins of the oxygen-evolving complex and a large number of cofactors. It forms dimeric complexes. Requires Binds multiple chlorophylls. PSII binds additional chlorophylls, carotenoids and specific lipids. as cofactor.

The protein resides in the plastid. It is found in the chloroplast thylakoid membrane. One of the components of the core complex of photosystem II (PSII). It binds chlorophyll and helps catalyze the primary light-induced photochemical processes of PSII. PSII is a light-driven water:plastoquinone oxidoreductase, using light energy to abstract electrons from H(2)O, generating O(2) and a proton gradient subsequently used for ATP formation. This chain is Photosystem II CP47 reaction center protein, found in Acorus calamus var. americanus (American sweet flag).